A 443-amino-acid chain; its full sequence is Serine/threonine-protein phosphatase 2A 55 kDa regulatory subunit B beta isoform (443 aa).

WD repeat units lie at residues 22–61 (TEADIISTVEFNHTGELLATGDKGGRVVIFQREQESKNQV), 87–128 (EIEE…KRPE), 171–209 (AHTYHINSISVNSDYETYMSADDLRINLWNFEITNQSFN), and 220–260 (ELTE…LCDR). Serine 275 carries the phosphoserine modification. WD repeat units follow at residues 279-317 (EIISSISDVKFSHSGRYIMTRDYLTVKVWDLNMENRPIE), 334-375 (ENDC…DVTL), and 410-442 (DFSKKILHTAWHPSENIIAVAATNNLYIFQDKV). Phosphotyrosine is present on tyrosine 295. At threonine 298 the chain carries Phosphothreonine.

Belongs to the phosphatase 2A regulatory subunit B family. In terms of assembly, PP2A consists of a common heterodimeric core enzyme, composed of a 36 kDa catalytic subunit (subunit C) and a 65 kDa constant regulatory subunit (PR65 or subunit A), that associates with a variety of regulatory subunits. Proteins that associate with the core dimer include three families of regulatory subunits B (the R2/B/PR55/B55, R3/B''/PR72/PR130/PR59 and R5/B'/B56 families), the 48 kDa variable regulatory subunit, viral proteins, and cell signaling molecules. Interacts with TOMM22. Interacts with IER5 (via N- and C-terminal regions).

The protein resides in the cytoplasm. It localises to the cytoskeleton. The protein localises to the membrane. The B regulatory subunit might modulate substrate selectivity and catalytic activity, and might also direct the localization of the catalytic enzyme to a particular subcellular compartment. This is Serine/threonine-protein phosphatase 2A 55 kDa regulatory subunit B beta isoform (PPP2R2B) from Bos taurus (Bovine).